Here is a 474-residue protein sequence, read N- to C-terminus: Sensor protein CreC (474 aa).

Topologically, residues 1-6 (MRIGMR) are periplasmic. Residues 7–27 (LLLGYFLLVAVAAWFVLAIFV) traverse the membrane as a helical segment. Residues 28–146 (KEVKPGVRRA…LQNPADPESS (119 aa)) lie on the Cytoplasmic side of the membrane. A helical membrane pass occupies residues 147–167 (VMYVAAPIMDGSRLIGVLSVG). Residues 168–183 (KPNAAMAPVIKRSERR) lie on the Periplasmic side of the membrane. A helical transmembrane segment spans residues 184–204 (ILWASAILLGIALVIGAGMVW). Residues 205–255 (WINRSIARLTRYADSVTDNKPVPLPDLGSSELRKLAQALESMRVKLEGKNY) form the HAMP domain. Over 205 to 474 (WINRSIARLT…ASLRLHRHFT (270 aa)) the chain is Cytoplasmic. One can recognise a Histidine kinase domain in the interval 262-473 (ALTHELKSPL…LASLRLHRHF (212 aa)). At histidine 265 the chain carries Phosphohistidine; by autocatalysis.

Autophosphorylated.

The protein localises to the cell inner membrane. It carries out the reaction ATP + protein L-histidine = ADP + protein N-phospho-L-histidine.. Functionally, member of the two-component regulatory system CreC/CreB involved in catabolic regulation. CreC may function as a membrane-associated protein kinase that phosphorylates CreB in response to environmental signals. CreC can also phosphorylate PhoB. The protein is Sensor protein CreC (creC) of Escherichia coli (strain K12).